A 339-amino-acid chain; its full sequence is Heme A synthase (339 aa).

8 consecutive transmembrane segments (helical) span residues 7-27, 92-112, 126-146, 159-179, 199-219, 254-274, 291-311, and 312-332; these read VIIWLLSGCFLVFIMVVVGGI, HRFIGRIIGLVFIIPFIYFLI, ILLGMGAFQGFLGWFMVKSGL, LHLTFAFITFAYTLWVALDLI, AIIILQIIYGGFVAGLNAGLI, VQFVHRTIAYFVAGLIVFLTF, ALLIIVFIQFTLGVLTLLYSV, and PLWLGVIHQAMAFILLATTTY. His-258 contacts heme. Residue His-319 coordinates heme.

Belongs to the COX15/CtaA family. Type 2 subfamily. Interacts with CtaB. Heme b is required as a cofactor.

The protein resides in the cell membrane. It catalyses the reaction Fe(II)-heme o + 2 A + H2O = Fe(II)-heme a + 2 AH2. It participates in porphyrin-containing compound metabolism; heme A biosynthesis; heme A from heme O: step 1/1. Functionally, catalyzes the conversion of heme O to heme A by two successive hydroxylations of the methyl group at C8. The first hydroxylation forms heme I, the second hydroxylation results in an unstable dihydroxymethyl group, which spontaneously dehydrates, resulting in the formyl group of heme A. The sequence is that of Heme A synthase from Flavobacterium psychrophilum (strain ATCC 49511 / DSM 21280 / CIP 103535 / JIP02/86).